The chain runs to 112 residues: Phosphoribosyl-ATP pyrophosphatase (112 aa).

This sequence belongs to the PRA-PH family.

The protein localises to the cytoplasm. It carries out the reaction 1-(5-phospho-beta-D-ribosyl)-ATP + H2O = 1-(5-phospho-beta-D-ribosyl)-5'-AMP + diphosphate + H(+). It participates in amino-acid biosynthesis; L-histidine biosynthesis; L-histidine from 5-phospho-alpha-D-ribose 1-diphosphate: step 2/9. This Chromohalobacter salexigens (strain ATCC BAA-138 / DSM 3043 / CIP 106854 / NCIMB 13768 / 1H11) protein is Phosphoribosyl-ATP pyrophosphatase.